Consider the following 244-residue polypeptide: UDP-2,3-diacylglucosamine hydrolase (244 aa).

Mn(2+) is bound by residues aspartate 8, histidine 10, aspartate 41, asparagine 79, and histidine 114. Residue 79-80 (NR) participates in substrate binding. The substrate site is built by aspartate 122, lysine 164, lysine 167, and histidine 195. Residues histidine 195 and histidine 197 each coordinate Mn(2+).

This sequence belongs to the LpxH family. Requires Mn(2+) as cofactor.

It localises to the cell inner membrane. The enzyme catalyses UDP-2-N,3-O-bis[(3R)-3-hydroxytetradecanoyl]-alpha-D-glucosamine + H2O = 2-N,3-O-bis[(3R)-3-hydroxytetradecanoyl]-alpha-D-glucosaminyl 1-phosphate + UMP + 2 H(+). It functions in the pathway glycolipid biosynthesis; lipid IV(A) biosynthesis; lipid IV(A) from (3R)-3-hydroxytetradecanoyl-[acyl-carrier-protein] and UDP-N-acetyl-alpha-D-glucosamine: step 4/6. Its function is as follows. Hydrolyzes the pyrophosphate bond of UDP-2,3-diacylglucosamine to yield 2,3-diacylglucosamine 1-phosphate (lipid X) and UMP by catalyzing the attack of water at the alpha-P atom. Involved in the biosynthesis of lipid A, a phosphorylated glycolipid that anchors the lipopolysaccharide to the outer membrane of the cell. This chain is UDP-2,3-diacylglucosamine hydrolase, found in Vibrio atlanticus (strain LGP32) (Vibrio splendidus (strain Mel32)).